Consider the following 257-residue polypeptide: Distal membrane-arm assembly complex protein 2 (257 aa).

Residue S253 is modified to Phosphoserine.

The protein belongs to the ATP synthase subunit s family. Interacts with incompletely assembled mitochondrial NADH:ubiquinone oxidoreductase complex (complex I).

It localises to the mitochondrion. Functionally, required for the assembly of the mitochondrial NADH:ubiquinone oxidoreductase complex (complex I). Involved in the assembly of the distal region of complex I. The sequence is that of Distal membrane-arm assembly complex protein 2 from Homo sapiens (Human).